A 138-amino-acid chain; its full sequence is Putative pre-16S rRNA nuclease (138 aa).

Belongs to the YqgF nuclease family.

The protein localises to the cytoplasm. Its function is as follows. Could be a nuclease involved in processing of the 5'-end of pre-16S rRNA. The protein is Putative pre-16S rRNA nuclease of Clostridium tetani (strain Massachusetts / E88).